The following is a 174-amino-acid chain: uncharacterized protein (174 aa).

Helical transmembrane passes span 29–51 and 66–83; these read FAVE…GFWY and VIVI…VTKI.

The protein resides in the cell membrane. This is an uncharacterized protein from Bacillus subtilis (strain 168).